The primary structure comprises 761 residues: Wall-associated receptor kinase-like 4 (761 aa).

The first 26 residues, 1-26 (MKKETQNLQCIPLVISVLSLFGVSSA), serve as a signal peptide directing secretion. Residues 27-349 (RKPPYLCNRV…EPKKPGQIKP (323 aa)) lie on the Extracellular side of the membrane. 5 N-linked (GlcNAc...) asparagine glycosylation sites follow: N64, N166, N206, N226, and N262. The atypical EGF-like stretch occupies residues 278 to 339 (CVCSYGYFSG…CVNKPGWFTC (62 aa)). 3 cysteine pairs are disulfide-bonded: C280/C293, C316/C330, and C325/C339. The chain crosses the membrane as a helical span at residues 350–370 (VFQGVLIGSALLLFAFGIFGL). Topologically, residues 371 to 761 (YKFIKKQRRS…VEPLVPLRTW (391 aa)) are cytoplasmic. In terms of domain architecture, Protein kinase spans 424-697 (FNTNRVLGQG…REVSVELERI (274 aa)). ATP is bound by residues 430 to 438 (LGQGGQGTV) and K452. Y497 bears the Phosphotyrosine mark. D549 acts as the Proton acceptor in catalysis. Phosphothreonine is present on residues T583 and T588. Residue Y596 is modified to Phosphotyrosine. A disordered region spans residues 701 to 761 (SYKSEIHNDD…VEPLVPLRTW (61 aa)). Over residues 708-732 (NDDDDDDDDDDEDDQAMELNIEETW) the composition is skewed to acidic residues.

Belongs to the protein kinase superfamily. Ser/Thr protein kinase family. In terms of tissue distribution, expressed in the whole plant. Detected in root-shoot junctions and lateral root initiation sites.

It is found in the membrane. The enzyme catalyses L-seryl-[protein] + ATP = O-phospho-L-seryl-[protein] + ADP + H(+). It carries out the reaction L-threonyl-[protein] + ATP = O-phospho-L-threonyl-[protein] + ADP + H(+). Functionally, serine/threonine-protein kinase that may function as a signaling receptor of extracellular matrix component. Plays a role in plant mineral nutrients response. The protein is Wall-associated receptor kinase-like 4 (WAKL4) of Arabidopsis thaliana (Mouse-ear cress).